Consider the following 332-residue polypeptide: Tetraacyldisaccharide 4'-kinase (332 aa).

Residue 58–65 participates in ATP binding; the sequence is TVGGSGKT.

It belongs to the LpxK family.

It carries out the reaction a lipid A disaccharide + ATP = a lipid IVA + ADP + H(+). The protein operates within glycolipid biosynthesis; lipid IV(A) biosynthesis; lipid IV(A) from (3R)-3-hydroxytetradecanoyl-[acyl-carrier-protein] and UDP-N-acetyl-alpha-D-glucosamine: step 6/6. In terms of biological role, transfers the gamma-phosphate of ATP to the 4'-position of a tetraacyldisaccharide 1-phosphate intermediate (termed DS-1-P) to form tetraacyldisaccharide 1,4'-bis-phosphate (lipid IVA). The chain is Tetraacyldisaccharide 4'-kinase from Shewanella piezotolerans (strain WP3 / JCM 13877).